The primary structure comprises 208 residues: Small ribosomal subunit protein uS2 (208 aa).

The interval 189–208 is disordered; the sequence is KPDQDLPVPPEEFETRLVQT.

The protein belongs to the universal ribosomal protein uS2 family.

The sequence is that of Small ribosomal subunit protein uS2 from Pyrobaculum arsenaticum (strain DSM 13514 / JCM 11321 / PZ6).